Consider the following 456-residue polypeptide: Chromosomal replication initiator protein DnaA (456 aa).

The domain I, interacts with DnaA modulators stretch occupies residues M1–H83. The tract at residues H83–S119 is domain II. Residues N120–A336 form a domain III, AAA+ region region. ATP contacts are provided by G164, G166, K167, and T168. The segment at N337–S456 is domain IV, binds dsDNA.

It belongs to the DnaA family. In terms of assembly, oligomerizes as a right-handed, spiral filament on DNA at oriC.

The protein resides in the cytoplasm. Plays an essential role in the initiation and regulation of chromosomal replication. ATP-DnaA binds to the origin of replication (oriC) to initiate formation of the DNA replication initiation complex once per cell cycle. Binds the DnaA box (a 9 base pair repeat at the origin) and separates the double-stranded (ds)DNA. Forms a right-handed helical filament on oriC DNA; dsDNA binds to the exterior of the filament while single-stranded (ss)DNA is stabiized in the filament's interior. The ATP-DnaA-oriC complex binds and stabilizes one strand of the AT-rich DNA unwinding element (DUE), permitting loading of DNA polymerase. After initiation quickly degrades to an ADP-DnaA complex that is not apt for DNA replication. Binds acidic phospholipids. The polypeptide is Chromosomal replication initiator protein DnaA (Aeromonas salmonicida (strain A449)).